The primary structure comprises 804 residues: Lon protease (804 aa).

The interval 1-23 (MSADSENETSESSPAGEATASTS) is disordered. Positions 30-224 (LILLPVRNAV…KVLDAVAGRI (195 aa)) constitute a Lon N-terminal domain. Residue 376–383 (GPPGVGKT) coordinates ATP. The 182-residue stretch at 612-793 (TSLPGVVTGL…DDAVREIIED (182 aa)) folds into the Lon proteolytic domain. Active-site residues include Ser699 and Lys742.

Belongs to the peptidase S16 family. As to quaternary structure, homohexamer. Organized in a ring with a central cavity.

It localises to the cytoplasm. The catalysed reaction is Hydrolysis of proteins in presence of ATP.. In terms of biological role, ATP-dependent serine protease that mediates the selective degradation of mutant and abnormal proteins as well as certain short-lived regulatory proteins. Required for cellular homeostasis and for survival from DNA damage and developmental changes induced by stress. Degrades polypeptides processively to yield small peptide fragments that are 5 to 10 amino acids long. Binds to DNA in a double-stranded, site-specific manner. This is Lon protease from Paraburkholderia phytofirmans (strain DSM 17436 / LMG 22146 / PsJN) (Burkholderia phytofirmans).